A 137-amino-acid polypeptide reads, in one-letter code: Large ribosomal subunit protein uL16 (137 aa).

It belongs to the universal ribosomal protein uL16 family. As to quaternary structure, part of the 50S ribosomal subunit.

Binds 23S rRNA and is also seen to make contacts with the A and possibly P site tRNAs. This is Large ribosomal subunit protein uL16 from Halorhodospira halophila (strain DSM 244 / SL1) (Ectothiorhodospira halophila (strain DSM 244 / SL1)).